A 148-amino-acid chain; its full sequence is UPF0260 protein PC1_1943 (148 aa).

Belongs to the UPF0260 family.

In Pectobacterium carotovorum subsp. carotovorum (strain PC1), this protein is UPF0260 protein PC1_1943.